The chain runs to 819 residues: DNA topoisomerase 4 subunit A (819 aa).

Residues 30 to 496 (LPDIRDGLKP…QIIEIDTASL (467 aa)) form the Topo IIA-type catalytic domain. The active-site O-(5'-phospho-DNA)-tyrosine intermediate is the tyrosine 118.

It belongs to the type II topoisomerase GyrA/ParC subunit family. ParC type 2 subfamily. Heterotetramer composed of ParC and ParE.

Its subcellular location is the cell membrane. It carries out the reaction ATP-dependent breakage, passage and rejoining of double-stranded DNA.. Functionally, topoisomerase IV is essential for chromosome segregation. It relaxes supercoiled DNA. Performs the decatenation events required during the replication of a circular DNA molecule. The sequence is that of DNA topoisomerase 4 subunit A from Streptococcus pyogenes serotype M6 (strain ATCC BAA-946 / MGAS10394).